The primary structure comprises 189 residues: ATP synthase subunit b (189 aa).

The helical transmembrane segment at 38–58 (PMFLATLIAFILVVLILWFLL) threads the bilayer.

This sequence belongs to the ATPase B chain family. F-type ATPases have 2 components, F(1) - the catalytic core - and F(0) - the membrane proton channel. F(1) has five subunits: alpha(3), beta(3), gamma(1), delta(1), epsilon(1). F(0) has three main subunits: a(1), b(2) and c(10-14). The alpha and beta chains form an alternating ring which encloses part of the gamma chain. F(1) is attached to F(0) by a central stalk formed by the gamma and epsilon chains, while a peripheral stalk is formed by the delta and b chains.

It is found in the cell membrane. Functionally, f(1)F(0) ATP synthase produces ATP from ADP in the presence of a proton or sodium gradient. F-type ATPases consist of two structural domains, F(1) containing the extramembraneous catalytic core and F(0) containing the membrane proton channel, linked together by a central stalk and a peripheral stalk. During catalysis, ATP synthesis in the catalytic domain of F(1) is coupled via a rotary mechanism of the central stalk subunits to proton translocation. Its function is as follows. Component of the F(0) channel, it forms part of the peripheral stalk, linking F(1) to F(0). In Mycoplasmopsis agalactiae (strain NCTC 10123 / CIP 59.7 / PG2) (Mycoplasma agalactiae), this protein is ATP synthase subunit b.